Reading from the N-terminus, the 41-residue chain is Large ribosomal subunit protein bL36 (41 aa).

This sequence belongs to the bacterial ribosomal protein bL36 family.

In Caulobacter vibrioides (strain ATCC 19089 / CIP 103742 / CB 15) (Caulobacter crescentus), this protein is Large ribosomal subunit protein bL36.